We begin with the raw amino-acid sequence, 282 residues long: Elongation factor Ts (282 aa).

Residues 79-82 (TDFV) form an involved in Mg(2+) ion dislocation from EF-Tu region.

Belongs to the EF-Ts family.

The protein resides in the cytoplasm. In terms of biological role, associates with the EF-Tu.GDP complex and induces the exchange of GDP to GTP. It remains bound to the aminoacyl-tRNA.EF-Tu.GTP complex up to the GTP hydrolysis stage on the ribosome. The protein is Elongation factor Ts of Colwellia psychrerythraea (strain 34H / ATCC BAA-681) (Vibrio psychroerythus).